The sequence spans 129 residues: Follitropin subunit beta (129 aa).

Residues 1–20 (MKTAQFYVLFFCWKAIWCNG) form the signal peptide. Disulfide bonds link Cys21–Cys69, Cys35–Cys84, Cys38–Cys122, Cys46–Cys100, Cys50–Cys102, and Cys105–Cys112. Residues Asn25 and Asn42 are each glycosylated (N-linked (GlcNAc...) asparagine).

This sequence belongs to the glycoprotein hormones subunit beta family. As to quaternary structure, heterodimer. The active follitropin is a heterodimer composed of an alpha chain/CGA shared with other hormones and a unique beta chain/FSHB shown here.

It localises to the secreted. In terms of biological role, together with the alpha chain CGA constitutes follitropin, the follicle-stimulating hormone, and provides its biological specificity to the hormone heterodimer. Binds FSHR, a G protein-coupled receptor, on target cells to activate downstream signaling pathways. Follitropin is involved in follicle development and spermatogenesis in reproductive organs. This Trichosurus vulpecula (Brush-tailed possum) protein is Follitropin subunit beta (FSHB).